Reading from the N-terminus, the 391-residue chain is Inactive polyketide synthase 2 (391 aa).

Residue C164 is part of the active site.

The protein belongs to the thiolase-like superfamily. Chalcone/stilbene synthases family. In terms of assembly, homodimer.

This Rubus idaeus (Raspberry) protein is Inactive polyketide synthase 2 (PKS2).